A 122-amino-acid polypeptide reads, in one-letter code: MARLAGVDLPREKRLEVALTYIYGVGRTRALETLEATGISGDVRVKDLTDPQLVELRDYIEGNYKVEGDLRREVAADIRRKVEIGSYQGLRHRRGLPVHGQRTKTNARTRKGPKRTVAGKKK.

The disordered stretch occupies residues R91–K122.

Belongs to the universal ribosomal protein uS13 family. As to quaternary structure, part of the 30S ribosomal subunit. Forms a loose heterodimer with protein S19. Forms two bridges to the 50S subunit in the 70S ribosome.

Located at the top of the head of the 30S subunit, it contacts several helices of the 16S rRNA. In the 70S ribosome it contacts the 23S rRNA (bridge B1a) and protein L5 of the 50S subunit (bridge B1b), connecting the 2 subunits; these bridges are implicated in subunit movement. Contacts the tRNAs in the A and P-sites. The protein is Small ribosomal subunit protein uS13 of Kocuria rhizophila (strain ATCC 9341 / DSM 348 / NBRC 103217 / DC2201).